The primary structure comprises 149 residues: Cyanate hydratase (149 aa).

Active-site residues include Arg90, Glu93, and Ser116.

This sequence belongs to the cyanase family.

It catalyses the reaction cyanate + hydrogencarbonate + 3 H(+) = NH4(+) + 2 CO2. Its function is as follows. Catalyzes the reaction of cyanate with bicarbonate to produce ammonia and carbon dioxide. The protein is Cyanate hydratase of Synechocystis sp. (strain ATCC 27184 / PCC 6803 / Kazusa).